We begin with the raw amino-acid sequence, 377 residues long: Chaperone protein DnaJ (377 aa).

The region spanning 5-69 (EYYDRLGVSK…QKRAAYDQYG (65 aa)) is the J domain. The CR-type zinc-finger motif lies at 133 to 215 (GTEKEVHYNR…CHGTGHEKQS (83 aa)). Residues Cys-146, Cys-149, Cys-163, Cys-166, Cys-189, Cys-192, Cys-203, and Cys-206 each contribute to the Zn(2+) site. 4 CXXCXGXG motif repeats span residues 146–153 (CHTCNGSG), 163–170 (CSKCHGSG), 189–196 (CDVCHGTG), and 203–210 (CPTCHGTG).

The protein belongs to the DnaJ family. In terms of assembly, homodimer. It depends on Zn(2+) as a cofactor.

The protein resides in the cytoplasm. Participates actively in the response to hyperosmotic and heat shock by preventing the aggregation of stress-denatured proteins and by disaggregating proteins, also in an autonomous, DnaK-independent fashion. Unfolded proteins bind initially to DnaJ; upon interaction with the DnaJ-bound protein, DnaK hydrolyzes its bound ATP, resulting in the formation of a stable complex. GrpE releases ADP from DnaK; ATP binding to DnaK triggers the release of the substrate protein, thus completing the reaction cycle. Several rounds of ATP-dependent interactions between DnaJ, DnaK and GrpE are required for fully efficient folding. Also involved, together with DnaK and GrpE, in the DNA replication of plasmids through activation of initiation proteins. The chain is Chaperone protein DnaJ from Streptococcus mutans serotype c (strain ATCC 700610 / UA159).